Consider the following 227-residue polypeptide: Phosphoribosylformylglycinamidine synthase subunit PurQ (227 aa).

A Glutamine amidotransferase type-1 domain is found at 3 to 225 (FAVIVFPGSN…LKQWRETYVV (223 aa)). Cys86 acts as the Nucleophile in catalysis. Active-site residues include His194 and Glu196.

Part of the FGAM synthase complex composed of 1 PurL, 1 PurQ and 2 PurS subunits.

It localises to the cytoplasm. It carries out the reaction N(2)-formyl-N(1)-(5-phospho-beta-D-ribosyl)glycinamide + L-glutamine + ATP + H2O = 2-formamido-N(1)-(5-O-phospho-beta-D-ribosyl)acetamidine + L-glutamate + ADP + phosphate + H(+). The enzyme catalyses L-glutamine + H2O = L-glutamate + NH4(+). The protein operates within purine metabolism; IMP biosynthesis via de novo pathway; 5-amino-1-(5-phospho-D-ribosyl)imidazole from N(2)-formyl-N(1)-(5-phospho-D-ribosyl)glycinamide: step 1/2. Functionally, part of the phosphoribosylformylglycinamidine synthase complex involved in the purines biosynthetic pathway. Catalyzes the ATP-dependent conversion of formylglycinamide ribonucleotide (FGAR) and glutamine to yield formylglycinamidine ribonucleotide (FGAM) and glutamate. The FGAM synthase complex is composed of three subunits. PurQ produces an ammonia molecule by converting glutamine to glutamate. PurL transfers the ammonia molecule to FGAR to form FGAM in an ATP-dependent manner. PurS interacts with PurQ and PurL and is thought to assist in the transfer of the ammonia molecule from PurQ to PurL. In Bacillus cereus (strain B4264), this protein is Phosphoribosylformylglycinamidine synthase subunit PurQ.